We begin with the raw amino-acid sequence, 517 residues long: Synaptic vesicular amine transporter (517 aa).

Residues 1 to 20 (MALSDLVLLRWLRDSRHSRK) lie on the Cytoplasmic side of the membrane. The helical transmembrane segment at 21-41 (LILFIVFLALLLDNMLLTVVV) threads the bilayer. At 42–132 (PIIPSYLYSI…EDKDLLNENV (91 aa)) the chain is on the extracellular side. Residues Asn56, Asn83, Asn84, Asn91, and Asn113 are each glycosylated (N-linked (GlcNAc...) asparagine). The interval 100–119 (ESPKATTTQHTVTNTTVPPD) is disordered. Low complexity predominate over residues 105 to 115 (TTTQHTVTNTT). A disulfide bridge connects residues Cys120 and Cys327. Residues 133–153 (QVGLLFASKATVQLLTNPFIG) form a helical membrane-spanning segment. Over 154 to 162 (LLTNRIGYP) the chain is Cytoplasmic. A helical membrane pass occupies residues 163 to 183 (IPMFAGFCIMFISTVMFAFSS). Topologically, residues 184 to 192 (SYAFLLIAR) are extracellular. Residues 193–213 (SLQGIGSSCSSVAGMGMLASV) traverse the membrane as a helical segment. The Cytoplasmic segment spans residues 214–222 (YTDDEERGN). Residues 223–245 (AMGIALGGLAMGVLVGPPFGSVL) form a helical membrane-spanning segment. Serotonin is bound by residues Leu231 and Val235. The Extracellular portion of the chain corresponds to 246–251 (YEFVGK). The chain crosses the membrane as a helical span at residues 252 to 274 (TAPFLVLAALVLLDGAIQLFVLQ). Residues 275–294 (PSRVQPESQKGTPLTTLLKD) are Cytoplasmic-facing. The chain crosses the membrane as a helical span at residues 295-314 (PYILIAAGSICFANMGIAML). The serotonin site is built by Asn308, Ile311, Glu315, Phe337, and Tyr344. Residues 315–331 (EPALPIWMMETMCSRKW) are Extracellular-facing. The helical transmembrane segment at 332 to 355 (QLGVAFLPASISYLIGTNIFGILA) threads the bilayer. Residues 356-360 (HKMGR) are Cytoplasmic-facing. A helical transmembrane segment spans residues 361-381 (WLCALLGMIVVGISILCIPFA). Residues 382–392 (KNIYGLIAPNF) lie on the Extracellular side of the membrane. Residues 393-413 (GVGFAIGMVDSSMMPIMGYLV) form a helical membrane-spanning segment. Residue Asp402 coordinates serotonin. At 414–417 (DLRH) the chain is on the cytoplasmic side. A helical transmembrane segment spans residues 418 to 438 (VSVYGSVYAIADVAFCMGYAI). Tyr436 serves as a coordination point for serotonin. At 439–443 (GPSAG) the chain is on the extracellular side. A helical transmembrane segment spans residues 444–465 (GAIAKAIGFPWLMTIIGIIDIV). The Cytoplasmic segment spans residues 466–517 (FAPLCFFLRSPPAKEEKMAILMDHNCPIKTKMYTQNNVQPYPVGDDEESESD). Residues Ser514 and Ser516 each carry the phosphoserine; by CK2 modification.

This sequence belongs to the major facilitator superfamily. Vesicular transporter family. Interacts with SLC6A3. As to expression, expressed in striata and substantia nigra.

It is found in the cytoplasmic vesicle. The protein localises to the secretory vesicle. Its subcellular location is the synaptic vesicle membrane. It localises to the secretory vesicle membrane. The protein resides in the cell projection. It is found in the axon. The protein localises to the dendrite. It carries out the reaction serotonin(in) + 2 H(+)(out) = serotonin(out) + 2 H(+)(in). The enzyme catalyses dopamine(in) + 2 H(+)(out) = dopamine(out) + 2 H(+)(in). It catalyses the reaction histamine(in) + 2 H(+)(out) = histamine(out) + 2 H(+)(in). With respect to regulation, strongly inhibited by reserpine and tetrabenazine. Also inhibited to a lesser extent by ketanserin and fenfluramine. Reserpine and ketanserin inhibit by blocking the substrate-binding pocket. Tetrabenazine traps SLC18A2/VMAT2 in an occluded conformation and its inhibition is specific to SLC18A2/VMAT2 but not SLC18A1/VMAT1. Electrogenic antiporter that exchanges one cationic monoamine with two intravesicular protons across the membrane of secretory and synaptic vesicles. Uses the electrochemical proton gradient established by the V-type proton-pump ATPase to accumulate high concentrations of monoamines inside the vesicles prior to their release via exocytosis. Transports a variety of catecholamines such as dopamine, adrenaline and noradrenaline, histamine, and indolamines such as serotonin. Regulates the transvesicular monoaminergic gradient that determines the quantal size. Mediates somatodendritic dopamine release in hippocampal neurons, likely as part of a regulated secretory pathway that integrates retrograde synaptic signals. Acts as a primary transporter for striatal dopamine loading ensuring impulse-dependent release of dopamine at the synaptic cleft. Responsible for histamine and serotonin storage and subsequent corelease from mast cell granules. This is Synaptic vesicular amine transporter (Slc18a2) from Mus musculus (Mouse).